The sequence spans 226 residues: Ribonuclease 3 (226 aa).

The region spanning 2–129 (IETISKTIKY…LIGAIYLDGG (128 aa)) is the RNase III domain. E42 is a binding site for Mg(2+). D46 is an active-site residue. Residues N115 and E118 each coordinate Mg(2+). E118 is a catalytic residue. The DRBM domain occupies 154–223 (DAKTILQEFI…ASLMLNQIKD (70 aa)).

Belongs to the ribonuclease III family. In terms of assembly, homodimer. The cofactor is Mg(2+).

Its subcellular location is the cytoplasm. It catalyses the reaction Endonucleolytic cleavage to 5'-phosphomonoester.. In terms of biological role, digests double-stranded RNA. Involved in the processing of primary rRNA transcript to yield the immediate precursors to the large and small rRNAs (23S and 16S). Processes some mRNAs, and tRNAs when they are encoded in the rRNA operon. Processes pre-crRNA and tracrRNA of type II CRISPR loci if present in the organism. The sequence is that of Ribonuclease 3 from Ehrlichia canis (strain Jake).